Reading from the N-terminus, the 68-residue chain is uncharacterized protein (68 aa).

This is an uncharacterized protein from Orgyia pseudotsugata (Douglas-fir tussock moth).